A 302-amino-acid chain; its full sequence is Nucleotide-binding protein Bamb_2855 (302 aa).

8–15 (GISGSGKS) is an ATP binding site. GTP is bound at residue 57 to 60 (DARS).

Belongs to the RapZ-like family.

Its function is as follows. Displays ATPase and GTPase activities. The sequence is that of Nucleotide-binding protein Bamb_2855 from Burkholderia ambifaria (strain ATCC BAA-244 / DSM 16087 / CCUG 44356 / LMG 19182 / AMMD) (Burkholderia cepacia (strain AMMD)).